A 509-amino-acid chain; its full sequence is Maturase K (509 aa).

This sequence belongs to the intron maturase 2 family. MatK subfamily.

It is found in the plastid. It localises to the chloroplast. In terms of biological role, usually encoded in the trnK tRNA gene intron. Probably assists in splicing its own and other chloroplast group II introns. In Nicotiana alata (Winged tobacco), this protein is Maturase K.